The chain runs to 126 residues: UPF0235 protein C15orf40 homolog (126 aa).

The segment at 1–33 (MPKKAGATSKGKNQTKEPETPPPPTGPVATDSK) is disordered. Residue Ser89 is modified to Phosphoserine.

This sequence belongs to the UPF0235 family.

This is UPF0235 protein C15orf40 homolog from Rattus norvegicus (Rat).